The chain runs to 594 residues: Potassium-transporting ATPase potassium-binding subunit (594 aa).

10 helical membrane-spanning segments follow: residues 3-23 (ADFL…APLL), 67-87 (AVAM…LQRL), 136-156 (ALTV…IALV), 179-199 (LYVL…QGVV), 287-307 (LEML…GEMV), 314-334 (VAIL…AAYF), 415-435 (GLYG…LMIG), 453-473 (VALV…VAVL), 519-539 (VLLG…ILAL), and 562-582 (LFVA…YVPA).

This sequence belongs to the KdpA family. The system is composed of three essential subunits: KdpA, KdpB and KdpC.

It localises to the cell inner membrane. Part of the high-affinity ATP-driven potassium transport (or Kdp) system, which catalyzes the hydrolysis of ATP coupled with the electrogenic transport of potassium into the cytoplasm. This subunit binds the periplasmic potassium ions and delivers the ions to the membrane domain of KdpB through an intramembrane tunnel. The protein is Potassium-transporting ATPase potassium-binding subunit of Bordetella pertussis (strain Tohama I / ATCC BAA-589 / NCTC 13251).